We begin with the raw amino-acid sequence, 466 residues long: MSDKKTSNQMWGGRFASGPAAIMEAINASISFDRKLYAQDIRGSIAHSEMLAQTGIISTADQEKIAHGLNTILKEIEAGSFEFSTRLEDIHMNVEARLADLIGSAAGRLHTARSRNDQVAVDLRLWVKDECFRVAEALKGLITALLARAEEHAATVMPGFTHMQAAQPVTFGHHCMAYVEMFARDLSRVRDAIERMDESPLGAAALAGTSFPIDRHRTAKALGFREPMRNSLDSVSDRDFALDFLAMAAICATHLSRLAEEIIIWSTPQFGFIRLSDSFSTGSSIMPQKKNPDAAELVRGKTGRVNGHLVGLLTVMKGMPLTYGKDMQEDKESVFDAAETLDLMLAAMTGMVSDMTVNAAAMKKAAGSGHATATDLADWLVRTLGLPFREAHHVTGRAVALAEEKKVSLEKLSLEDLQSINPGITADIFSVLAVQNSVKSRTSFGGTAPSEVRKQIRYWKKRLAKA.

The protein belongs to the lyase 1 family. Argininosuccinate lyase subfamily.

The protein localises to the cytoplasm. It carries out the reaction 2-(N(omega)-L-arginino)succinate = fumarate + L-arginine. Its pathway is amino-acid biosynthesis; L-arginine biosynthesis; L-arginine from L-ornithine and carbamoyl phosphate: step 3/3. In Mesorhizobium japonicum (strain LMG 29417 / CECT 9101 / MAFF 303099) (Mesorhizobium loti (strain MAFF 303099)), this protein is Argininosuccinate lyase 1.